The chain runs to 313 residues: Ribosomal RNA small subunit methyltransferase H (313 aa).

S-adenosyl-L-methionine-binding positions include 35-37 (GGH), Asp-55, Phe-79, Asp-101, and Gln-108.

The protein belongs to the methyltransferase superfamily. RsmH family.

It localises to the cytoplasm. It catalyses the reaction cytidine(1402) in 16S rRNA + S-adenosyl-L-methionine = N(4)-methylcytidine(1402) in 16S rRNA + S-adenosyl-L-homocysteine + H(+). In terms of biological role, specifically methylates the N4 position of cytidine in position 1402 (C1402) of 16S rRNA. The sequence is that of Ribosomal RNA small subunit methyltransferase H from Escherichia coli O139:H28 (strain E24377A / ETEC).